Here is a 204-residue protein sequence, read N- to C-terminus: Probable carboxysome shell protein CsoS1E (204 aa).

Composition is skewed to low complexity over residues 1–14, 41–84, and 92–102; these read MPKP…DSPS, SAST…AAGS, and GGAIKPPASSS. The interval 1 to 102 is disordered; that stretch reads MPKPSSSSSS…GAIKPPASSS (102 aa). The region spanning 111-196 is the BMC domain; the sequence is ALGMIETRGM…PHQEVEPALR (86 aa).

This sequence belongs to the bacterial microcompartments protein family. Homohexamer.

Its subcellular location is the carboxysome. Its function is as follows. A probable carboxysomal shell protein found only in Prochlorococcus and Synechococcus strains that grow in low light. This is Probable carboxysome shell protein CsoS1E from Prochlorococcus marinus (strain MIT 9313).